A 536-amino-acid polypeptide reads, in one-letter code: 2-isopropylmalate synthase (536 aa).

The region spanning 8–273 is the Pyruvate carboxyltransferase domain; that stretch reads VLIFDTTLRD…FFGRDPESPT (266 aa). Mn(2+) is bound by residues D17, H208, H210, and N244. A regulatory domain region spans residues 408–536; sequence QLQLVQVSCG…PQHDLIKANL (129 aa).

The protein belongs to the alpha-IPM synthase/homocitrate synthase family. LeuA type 1 subfamily. In terms of assembly, homodimer. Mn(2+) serves as cofactor.

Its subcellular location is the cytoplasm. The enzyme catalyses 3-methyl-2-oxobutanoate + acetyl-CoA + H2O = (2S)-2-isopropylmalate + CoA + H(+). It participates in amino-acid biosynthesis; L-leucine biosynthesis; L-leucine from 3-methyl-2-oxobutanoate: step 1/4. Functionally, catalyzes the condensation of the acetyl group of acetyl-CoA with 3-methyl-2-oxobutanoate (2-ketoisovalerate) to form 3-carboxy-3-hydroxy-4-methylpentanoate (2-isopropylmalate). The sequence is that of 2-isopropylmalate synthase from Prochlorococcus marinus (strain MIT 9211).